The sequence spans 622 residues: Chaperone protein HscA homolog (622 aa).

It belongs to the heat shock protein 70 family.

Its function is as follows. Chaperone involved in the maturation of iron-sulfur cluster-containing proteins. Has a low intrinsic ATPase activity which is markedly stimulated by HscB. This Burkholderia lata (strain ATCC 17760 / DSM 23089 / LMG 22485 / NCIMB 9086 / R18194 / 383) protein is Chaperone protein HscA homolog.